A 368-amino-acid polypeptide reads, in one-letter code: F-box/kelch-repeat protein At5g51250 (368 aa).

Positions 1–44 (MSSLPDDLLLSIFARISRLYYPTLSLVSKSFRSLLASPDLYKAR) constitute an F-box domain. Kelch repeat units follow at residues 116 to 163 (DIYN…VLDR), 165 to 218 (IYVA…CIDG), and 260 to 304 (LFYI…YGGK).

This is F-box/kelch-repeat protein At5g51250 from Arabidopsis thaliana (Mouse-ear cress).